A 445-amino-acid polypeptide reads, in one-letter code: MREIVHLQAGQCGNQIGAKFWEVISDEHGIDPTGAYHGDSDLQLERINVYYNEATGGKYVPRAVLVDLEPGTMDSVRSGPFGQIFRPDNFVFGQSGAGNNWAKGHYTEGAELVDSVLDVVRKEAESCDCLQGFQLTHSLGGGTGSGMGTLLISKIREEYPDRIMNTFSVVPSPKVSDTVVEPYNATLSVHQLVENTDETYCIDNEALYDICFRTLKLTTPTYGDLNHLVSATMSGVTTCLRFPGQLNADLRKLAVNMVPFPRLHFFMPGFAPLTSRGSQQYRALTVPELTQQMFDAKNMMAACDPRHGRYLTVAAIFRGRMSMKEVDEQMLNVQNKNSSYFVEWIPNNVKTAVCDIPPRGLKMSATFIGNSTAIQELFKRISEQFTAMFRRKAFLHWYTGEGMDEMEFTEAESNMNDLVSEYQQYQDATAEEEGEFEEGEEEENA.

Positions 1 to 4 match the MREI motif motif; that stretch reads MREI. 8 residues coordinate GTP: Gln-11, Glu-69, Ser-138, Gly-142, Thr-143, Gly-144, Asn-204, and Asn-226. Glu-69 provides a ligand contact to Mg(2+). A disordered region spans residues 425 to 445; it reads YQDATAEEEGEFEEGEEEENA. Acidic residues predominate over residues 429–445; it reads TAEEEGEFEEGEEEENA. Position 438 is a 5-glutamyl polyglutamate (Glu-438).

Belongs to the tubulin family. In terms of assembly, dimer of alpha and beta chains. A typical microtubule is a hollow water-filled tube with an outer diameter of 25 nm and an inner diameter of 15 nM. Alpha-beta heterodimers associate head-to-tail to form protofilaments running lengthwise along the microtubule wall with the beta-tubulin subunit facing the microtubule plus end conferring a structural polarity. Microtubules usually have 13 protofilaments but different protofilament numbers can be found in some organisms and specialized cells. Mg(2+) serves as cofactor. Some glutamate residues at the C-terminus are polyglycylated, resulting in polyglycine chains on the gamma-carboxyl group. Glycylation is mainly limited to tubulin incorporated into axonemes (cilia and flagella) whereas glutamylation is prevalent in neuronal cells, centrioles, axonemes, and the mitotic spindle. Both modifications can coexist on the same protein on adjacent residues, and lowering polyglycylation levels increases polyglutamylation, and reciprocally. The precise function of polyglycylation is still unclear. In terms of processing, some glutamate residues at the C-terminus are polyglutamylated, resulting in polyglutamate chains on the gamma-carboxyl group. Polyglutamylation plays a key role in microtubule severing by spastin (SPAST). SPAST preferentially recognizes and acts on microtubules decorated with short polyglutamate tails: severing activity by SPAST increases as the number of glutamates per tubulin rises from one to eight, but decreases beyond this glutamylation threshold. In terms of tissue distribution, preferential expression in germ cells.

The protein resides in the cytoplasm. The protein localises to the cytoskeleton. Functionally, tubulin is the major constituent of microtubules, a cylinder consisting of laterally associated linear protofilaments composed of alpha- and beta-tubulin heterodimers. Microtubules grow by the addition of GTP-tubulin dimers to the microtubule end, where a stabilizing cap forms. Below the cap, tubulin dimers are in GDP-bound state, owing to GTPase activity of alpha-tubulin. The protein is Tubulin beta-4 chain (tubb4) of Xenopus laevis (African clawed frog).